The sequence spans 432 residues: D-amino acid dehydrogenase (432 aa).

Residue 3–17 (VVILGSGVVGVASAW) coordinates FAD.

This sequence belongs to the DadA oxidoreductase family. The cofactor is FAD.

The catalysed reaction is a D-alpha-amino acid + A + H2O = a 2-oxocarboxylate + AH2 + NH4(+). The protein operates within amino-acid degradation; D-alanine degradation; NH(3) and pyruvate from D-alanine: step 1/1. Functionally, oxidative deamination of D-amino acids. The protein is D-amino acid dehydrogenase of Escherichia coli O45:K1 (strain S88 / ExPEC).